The chain runs to 2475 residues: Gellan lyase (2475 aa).

The N-terminal stretch at 1–35 is a signal peptide; the sequence is MRFSWKKLVSAALVMALLVGIVYPAASGRGAVASA. The Fibronectin type-III domain maps to 623-708; the sequence is APANVQVAIS…QPATATSPGE (86 aa). One can recognise a NodB homology domain in the interval 1295–1518; it reads GAFSLTIDDN…RDQIWVGRYG (224 aa). Residues 2111-2223 enclose the Cohesin domain; the sequence is QPGQQLELTV…VSTAVSLSDF (113 aa).

In terms of processing, subject to proteolytic processing after secretion. Cleavage occurs between Gly-1205 and Leu-1206. This gives rise to a N-terminal gellan lyase of 130 kDa being the mature form of the gellan lyase. The function of C-terminal gellan lyase is not known.

It localises to the secreted. The enzyme catalyses Eliminative cleavage of beta-D-glucopyranosyl-(1-&gt;4)-beta-D-glucopyranosyluronate bonds of gellan backbone releasing tetrasaccharides containing a 4-deoxy-4,5-unsaturated D-glucopyranosyluronic acid at the non-reducing end. The tetrasaccharide produced from deacetylated gellan is beta-D-4-deoxy-Delta(4)-GlcAp-(1-&gt;4)-beta-D-Glcp-(1-&gt;4)-alpha-L-Rhap-(1-&gt;3)-beta-D-Glcp.. Its function is as follows. Cleaves the glycosidic bonds of gellan backbone and releases tetrasaccharide units of glucuronyl-glucosyl-rhamnosyl-glucose with unsaturated glucuronic acid at the non-reducing terminal. The enzyme is highly specific to the heteropolysaccharide gellan, especially deacetylated gellan. The chain is Gellan lyase from Bacillus sp.